The following is a 186-amino-acid chain: Probable calcium-binding protein CML25 (186 aa).

Residues 1–17 (MFNKNQGSNGGSSSNVG) show a composition bias toward low complexity. The tract at residues 1–23 (MFNKNQGSNGGSSSNVGIGADSP) is disordered. EF-hand domains follow at residues 33–68 (TEIR…LGHE), 69–104 (VPEE…GMDQ), 106–141 (DVLE…LGDE), and 142–177 (CSIA…GSRR). Ca(2+)-binding residues include aspartate 46, asparagine 48, aspartate 50, lysine 52, and glutamate 57. Aspartate 119, aspartate 121, asparagine 123, serine 125, glutamate 130, aspartate 155, aspartate 157, aspartate 159, threonine 161, and glutamate 166 together coordinate Ca(2+).

Its function is as follows. Potential calcium sensor. The protein is Probable calcium-binding protein CML25 (CML25) of Arabidopsis thaliana (Mouse-ear cress).